The primary structure comprises 416 residues: Multifunctional CCA protein (416 aa).

The ATP site is built by Gly-8 and Arg-11. Positions 8 and 11 each coordinate CTP. Mg(2+) is bound by residues Asp-21 and Asp-23. The ATP site is built by Arg-91, Arg-137, and Arg-140. 3 residues coordinate CTP: Arg-91, Arg-137, and Arg-140. One can recognise an HD domain in the interval 228 to 329 (TGVHTLMVLA…VKIFDKADFW (102 aa)).

This sequence belongs to the tRNA nucleotidyltransferase/poly(A) polymerase family. Bacterial CCA-adding enzyme type 1 subfamily. As to quaternary structure, monomer. Can also form homodimers and oligomers. Mg(2+) is required as a cofactor. It depends on Ni(2+) as a cofactor.

It catalyses the reaction a tRNA precursor + 2 CTP + ATP = a tRNA with a 3' CCA end + 3 diphosphate. The enzyme catalyses a tRNA with a 3' CCA end + 2 CTP + ATP = a tRNA with a 3' CCACCA end + 3 diphosphate. In terms of biological role, catalyzes the addition and repair of the essential 3'-terminal CCA sequence in tRNAs without using a nucleic acid template. Adds these three nucleotides in the order of C, C, and A to the tRNA nucleotide-73, using CTP and ATP as substrates and producing inorganic pyrophosphate. tRNA 3'-terminal CCA addition is required both for tRNA processing and repair. Also involved in tRNA surveillance by mediating tandem CCA addition to generate a CCACCA at the 3' terminus of unstable tRNAs. While stable tRNAs receive only 3'-terminal CCA, unstable tRNAs are marked with CCACCA and rapidly degraded. In Shewanella baltica (strain OS223), this protein is Multifunctional CCA protein.